A 452-amino-acid chain; its full sequence is Bifunctional protein GlmU (452 aa).

The segment at 1 to 226 is pyrophosphorylase; sequence MVAVAILAAG…SQEILGINDR (226 aa). Residues 7–10, lysine 21, glutamine 73, and 78–79 each bind UDP-N-acetyl-alpha-D-glucosamine; these read LAAG and GT. Aspartate 103 provides a ligand contact to Mg(2+). Glycine 140, glutamate 155, asparagine 170, and asparagine 224 together coordinate UDP-N-acetyl-alpha-D-glucosamine. Asparagine 224 provides a ligand contact to Mg(2+). The segment at 227 to 247 is linker; the sequence is LQLADSFRILQERIRQQWMLA. Residues 248–452 form an N-acetyltransferase region; sequence GVTLVDPTSI…ENWSTPTTEQ (205 aa). UDP-N-acetyl-alpha-D-glucosamine contacts are provided by arginine 329 and lysine 347. The active-site Proton acceptor is the histidine 359. Residues tyrosine 362 and asparagine 373 each coordinate UDP-N-acetyl-alpha-D-glucosamine. Residues alanine 376, 382 to 383, alanine 419, and arginine 436 contribute to the acetyl-CoA site; that span reads NY.

In the N-terminal section; belongs to the N-acetylglucosamine-1-phosphate uridyltransferase family. It in the C-terminal section; belongs to the transferase hexapeptide repeat family. As to quaternary structure, homotrimer. Mg(2+) is required as a cofactor.

It is found in the cytoplasm. It carries out the reaction alpha-D-glucosamine 1-phosphate + acetyl-CoA = N-acetyl-alpha-D-glucosamine 1-phosphate + CoA + H(+). The enzyme catalyses N-acetyl-alpha-D-glucosamine 1-phosphate + UTP + H(+) = UDP-N-acetyl-alpha-D-glucosamine + diphosphate. Its pathway is nucleotide-sugar biosynthesis; UDP-N-acetyl-alpha-D-glucosamine biosynthesis; N-acetyl-alpha-D-glucosamine 1-phosphate from alpha-D-glucosamine 6-phosphate (route II): step 2/2. The protein operates within nucleotide-sugar biosynthesis; UDP-N-acetyl-alpha-D-glucosamine biosynthesis; UDP-N-acetyl-alpha-D-glucosamine from N-acetyl-alpha-D-glucosamine 1-phosphate: step 1/1. It participates in bacterial outer membrane biogenesis; LPS lipid A biosynthesis. Catalyzes the last two sequential reactions in the de novo biosynthetic pathway for UDP-N-acetylglucosamine (UDP-GlcNAc). The C-terminal domain catalyzes the transfer of acetyl group from acetyl coenzyme A to glucosamine-1-phosphate (GlcN-1-P) to produce N-acetylglucosamine-1-phosphate (GlcNAc-1-P), which is converted into UDP-GlcNAc by the transfer of uridine 5-monophosphate (from uridine 5-triphosphate), a reaction catalyzed by the N-terminal domain. The sequence is that of Bifunctional protein GlmU from Synechococcus sp. (strain ATCC 27144 / PCC 6301 / SAUG 1402/1) (Anacystis nidulans).